We begin with the raw amino-acid sequence, 299 residues long: Cuticle collagen 34 (299 aa).

The disordered stretch occupies residues 105 to 282 (PGPAGTPGKP…GSPGERGICP (178 aa)). The segment covering 129-162 (PGRPPQQPCEPITPPPCKPCPQGPPGPPGPPGPP) has biased composition (pro residues). The segment covering 164–181 (DSGEPGSPGLPGQDAAPG) has biased composition (low complexity). Pro residues-rich tracts occupy residues 182 to 195 (EPGP…PGAP) and 215 to 233 (PGEP…PGSP). Residues 216–278 (GEPGPPGEAG…AGPPGSPGER (63 aa)) form a triple-helical region region. Residues 251–263 (NGPDGQPGADGNP) show a composition bias toward low complexity. Residues 265-274 (APGPAGPPGS) are compositionally biased toward pro residues.

The protein belongs to the cuticular collagen family. As to quaternary structure, collagen polypeptide chains are complexed within the cuticle by disulfide bonds and other types of covalent cross-links.

Functionally, nematode cuticles are composed largely of collagen-like proteins. The cuticle functions both as an exoskeleton and as a barrier to protect the worm from its environment. The sequence is that of Cuticle collagen 34 (col-34) from Caenorhabditis elegans.